We begin with the raw amino-acid sequence, 376 residues long: Erythronate-4-phosphate dehydrogenase (376 aa).

2 residues coordinate substrate: serine 45 and threonine 67. Residues 127 to 128, aspartate 147, and threonine 176 contribute to the NAD(+) site; that span reads QV. The active site involves arginine 209. Aspartate 233 is an NAD(+) binding site. Glutamate 238 is an active-site residue. Catalysis depends on histidine 255, which acts as the Proton donor. Glycine 258 contributes to the NAD(+) binding site. Tyrosine 259 lines the substrate pocket.

Belongs to the D-isomer specific 2-hydroxyacid dehydrogenase family. PdxB subfamily. Homodimer.

Its subcellular location is the cytoplasm. The enzyme catalyses 4-phospho-D-erythronate + NAD(+) = (R)-3-hydroxy-2-oxo-4-phosphooxybutanoate + NADH + H(+). The protein operates within cofactor biosynthesis; pyridoxine 5'-phosphate biosynthesis; pyridoxine 5'-phosphate from D-erythrose 4-phosphate: step 2/5. Functionally, catalyzes the oxidation of erythronate-4-phosphate to 3-hydroxy-2-oxo-4-phosphonooxybutanoate. The chain is Erythronate-4-phosphate dehydrogenase from Aliivibrio salmonicida (strain LFI1238) (Vibrio salmonicida (strain LFI1238)).